The primary structure comprises 364 residues: Peroxisome biogenesis protein 3-2 (364 aa).

A helical transmembrane segment spans residues 15 to 32 (VLVTAGCLGSGYLLYKLY). Residues 33–62 (NSHTRRLADLERELAHERENDEIIKTQMKA) are a coiled coil.

Belongs to the peroxin-3 family.

It localises to the peroxisome membrane. Its function is as follows. Involved in morphology determination of peroxisomes, but not in import of peroxisomal matrix proteins. May act as a docking factor for PEX19 and be necessary for the import of peroxisomal membrane proteins in the peroxisomes. In Arabidopsis thaliana (Mouse-ear cress), this protein is Peroxisome biogenesis protein 3-2 (PEX3-2).